The primary structure comprises 275 residues: Phosphonoacetaldehyde hydrolase (275 aa).

Asp15 functions as the Nucleophile in the catalytic mechanism. Residues Asp15 and Ala17 each contribute to the Mg(2+) site. Lys56 (schiff-base intermediate with substrate) is an active-site residue. Residue Asp189 participates in Mg(2+) binding.

Belongs to the HAD-like hydrolase superfamily. PhnX family. In terms of assembly, homodimer. Requires Mg(2+) as cofactor.

The enzyme catalyses phosphonoacetaldehyde + H2O = acetaldehyde + phosphate + H(+). Functionally, involved in phosphonate degradation. In Pseudomonas putida (strain ATCC 700007 / DSM 6899 / JCM 31910 / BCRC 17059 / LMG 24140 / F1), this protein is Phosphonoacetaldehyde hydrolase.